A 350-amino-acid chain; its full sequence is UDP-3-O-acylglucosamine N-acyltransferase (350 aa).

The Proton acceptor role is filled by His-257.

This sequence belongs to the transferase hexapeptide repeat family. LpxD subfamily. As to quaternary structure, homotrimer.

It catalyses the reaction a UDP-3-O-[(3R)-3-hydroxyacyl]-alpha-D-glucosamine + a (3R)-hydroxyacyl-[ACP] = a UDP-2-N,3-O-bis[(3R)-3-hydroxyacyl]-alpha-D-glucosamine + holo-[ACP] + H(+). The protein operates within bacterial outer membrane biogenesis; LPS lipid A biosynthesis. Catalyzes the N-acylation of UDP-3-O-acylglucosamine using 3-hydroxyacyl-ACP as the acyl donor. Is involved in the biosynthesis of lipid A, a phosphorylated glycolipid that anchors the lipopolysaccharide to the outer membrane of the cell. This is UDP-3-O-acylglucosamine N-acyltransferase from Chelativorans sp. (strain BNC1).